The following is a 947-amino-acid chain: Bifunctional glutamine synthetase adenylyltransferase/adenylyl-removing enzyme (947 aa).

The adenylyl removase stretch occupies residues methionine 1 to glutamate 440. The tract at residues serine 450–valine 947 is adenylyl transferase.

It belongs to the GlnE family. It depends on Mg(2+) as a cofactor.

It carries out the reaction [glutamine synthetase]-O(4)-(5'-adenylyl)-L-tyrosine + phosphate = [glutamine synthetase]-L-tyrosine + ADP. It catalyses the reaction [glutamine synthetase]-L-tyrosine + ATP = [glutamine synthetase]-O(4)-(5'-adenylyl)-L-tyrosine + diphosphate. In terms of biological role, involved in the regulation of glutamine synthetase GlnA, a key enzyme in the process to assimilate ammonia. When cellular nitrogen levels are high, the C-terminal adenylyl transferase (AT) inactivates GlnA by covalent transfer of an adenylyl group from ATP to specific tyrosine residue of GlnA, thus reducing its activity. Conversely, when nitrogen levels are low, the N-terminal adenylyl removase (AR) activates GlnA by removing the adenylyl group by phosphorolysis, increasing its activity. The regulatory region of GlnE binds the signal transduction protein PII (GlnB) which indicates the nitrogen status of the cell. This chain is Bifunctional glutamine synthetase adenylyltransferase/adenylyl-removing enzyme, found in Salmonella paratyphi B (strain ATCC BAA-1250 / SPB7).